The sequence spans 172 residues: Large ribosomal subunit protein uL10 (172 aa).

This sequence belongs to the universal ribosomal protein uL10 family. In terms of assembly, part of the ribosomal stalk of the 50S ribosomal subunit. The N-terminus interacts with L11 and the large rRNA to form the base of the stalk. The C-terminus forms an elongated spine to which L12 dimers bind in a sequential fashion forming a multimeric L10(L12)X complex.

In terms of biological role, forms part of the ribosomal stalk, playing a central role in the interaction of the ribosome with GTP-bound translation factors. This chain is Large ribosomal subunit protein uL10, found in Methylorubrum populi (strain ATCC BAA-705 / NCIMB 13946 / BJ001) (Methylobacterium populi).